A 493-amino-acid chain; its full sequence is Glycerol kinase (493 aa).

Thr13 contributes to the ADP binding site. Residues Thr13, Thr14, and Ser15 each coordinate ATP. Thr13 contributes to the sn-glycerol 3-phosphate binding site. Arg17 provides a ligand contact to ADP. Residues Arg83, Glu84, Tyr135, and Asp244 each coordinate sn-glycerol 3-phosphate. Arg83, Glu84, Tyr135, Asp244, and Gln245 together coordinate glycerol. Residues Thr266 and Gly309 each coordinate ADP. ATP contacts are provided by Thr266, Gly309, Gln313, and Gly410. ADP-binding residues include Gly410 and Asn414.

This sequence belongs to the FGGY kinase family.

The catalysed reaction is glycerol + ATP = sn-glycerol 3-phosphate + ADP + H(+). Its pathway is polyol metabolism; glycerol degradation via glycerol kinase pathway; sn-glycerol 3-phosphate from glycerol: step 1/1. Inhibited by fructose 1,6-bisphosphate (FBP). Key enzyme in the regulation of glycerol uptake and metabolism. Catalyzes the phosphorylation of glycerol to yield sn-glycerol 3-phosphate. The protein is Glycerol kinase of Shewanella piezotolerans (strain WP3 / JCM 13877).